The following is an 830-amino-acid chain: Receptor-like protein kinase HERK 1 (830 aa).

An N-terminal signal peptide occupies residues 1 to 24; sequence MGIEKFETFILISTISILLCICHG. Residues 25-405 lie on the Extracellular side of the membrane; that stretch reads FTPVDNYLIN…SSSSSKSNLG (381 aa). 5 N-linked (GlcNAc...) asparagine glycosylation sites follow: asparagine 40, asparagine 146, asparagine 217, asparagine 280, and asparagine 381. A helical transmembrane segment spans residues 406–426; that stretch reads LIVGSAIGSLLAVVFLGSCFV. The Cytoplasmic segment spans residues 427 to 830; it reads LYKKRKRGQD…FSQLVKSEGR (404 aa). The Protein kinase domain occupies 485–758; it reads FDESRNIGVG…GDVLWNLEYA (274 aa). Residues 491-499 and lysine 513 contribute to the ATP site; that span reads IGVGGFGKV. Catalysis depends on aspartate 609, which acts as the Proton acceptor.

Belongs to the protein kinase superfamily. Ser/Thr protein kinase family. In terms of processing, autophosphorylated. In terms of tissue distribution, expressed in most vegetative tissues, including leaves, stems and roots, especially in cell elongation regions.

Its subcellular location is the cell membrane. In terms of biological role, receptor-like protein kinase required for cell elongation during vegetative growth, mostly in a brassinosteroid-(BR-) independent manner. The sequence is that of Receptor-like protein kinase HERK 1 (HERK1) from Arabidopsis thaliana (Mouse-ear cress).